The primary structure comprises 713 residues: Phosphoribosylformylglycinamidine synthase subunit PurL (713 aa).

Over residues 1–17 (MSLSPSDRELVTEELGR) the composition is skewed to basic and acidic residues. The segment at 1–20 (MSLSPSDRELVTEELGREPT) is disordered. Residue His34 is part of the active site. Tyr37 is a binding site for ATP. Glu85 provides a ligand contact to Mg(2+). Substrate is bound by residues 86-89 (SHNH) and Arg108. The active-site Proton acceptor is the His87. Residue Asp109 participates in Mg(2+) binding. Gln233 contacts substrate. Asp261 is a Mg(2+) binding site. 305-307 (ESQ) is a substrate binding site. The ATP site is built by Asp480 and Gly517. Mg(2+) is bound at residue Asn518. Ser520 contacts substrate.

It belongs to the FGAMS family. In terms of assembly, monomer. Part of the FGAM synthase complex composed of 1 PurL, 1 PurQ and 2 PurS subunits.

It is found in the cytoplasm. The catalysed reaction is N(2)-formyl-N(1)-(5-phospho-beta-D-ribosyl)glycinamide + L-glutamine + ATP + H2O = 2-formamido-N(1)-(5-O-phospho-beta-D-ribosyl)acetamidine + L-glutamate + ADP + phosphate + H(+). Its pathway is purine metabolism; IMP biosynthesis via de novo pathway; 5-amino-1-(5-phospho-D-ribosyl)imidazole from N(2)-formyl-N(1)-(5-phospho-D-ribosyl)glycinamide: step 1/2. Functionally, part of the phosphoribosylformylglycinamidine synthase complex involved in the purines biosynthetic pathway. Catalyzes the ATP-dependent conversion of formylglycinamide ribonucleotide (FGAR) and glutamine to yield formylglycinamidine ribonucleotide (FGAM) and glutamate. The FGAM synthase complex is composed of three subunits. PurQ produces an ammonia molecule by converting glutamine to glutamate. PurL transfers the ammonia molecule to FGAR to form FGAM in an ATP-dependent manner. PurS interacts with PurQ and PurL and is thought to assist in the transfer of the ammonia molecule from PurQ to PurL. This chain is Phosphoribosylformylglycinamidine synthase subunit PurL, found in Natronomonas pharaonis (strain ATCC 35678 / DSM 2160 / CIP 103997 / JCM 8858 / NBRC 14720 / NCIMB 2260 / Gabara) (Halobacterium pharaonis).